Here is a 492-residue protein sequence, read N- to C-terminus: UDP-N-acetylmuramate--L-alanine ligase (492 aa).

126 to 132 (GTHGKTT) lines the ATP pocket.

This sequence belongs to the MurCDEF family.

The protein resides in the cytoplasm. It catalyses the reaction UDP-N-acetyl-alpha-D-muramate + L-alanine + ATP = UDP-N-acetyl-alpha-D-muramoyl-L-alanine + ADP + phosphate + H(+). Its pathway is cell wall biogenesis; peptidoglycan biosynthesis. Cell wall formation. The protein is UDP-N-acetylmuramate--L-alanine ligase of Serratia proteamaculans (strain 568).